Consider the following 178-residue polypeptide: Nucleoside-triphosphatase THEP1 (178 aa).

Residues 9–16 and 101–108 each bind ATP; these read GPVGSIKA and VIIIDEVG.

It belongs to the THEP1 NTPase family.

It catalyses the reaction a ribonucleoside 5'-triphosphate + H2O = a ribonucleoside 5'-diphosphate + phosphate + H(+). Its function is as follows. Has nucleotide phosphatase activity towards ATP, GTP, CTP, TTP and UTP. May hydrolyze nucleoside diphosphates with lower efficiency. The chain is Nucleoside-triphosphatase THEP1 from Thermoplasma volcanium (strain ATCC 51530 / DSM 4299 / JCM 9571 / NBRC 15438 / GSS1).